The chain runs to 228 residues: Ribose-5-phosphate isomerase A (228 aa).

Substrate-binding positions include 29–32, 84–87, and 97–100; these read TGST, DGAD, and KGGG. The active-site Proton acceptor is the E106. Position 124 (K124) interacts with substrate.

It belongs to the ribose 5-phosphate isomerase family. Homodimer.

It catalyses the reaction aldehydo-D-ribose 5-phosphate = D-ribulose 5-phosphate. The protein operates within carbohydrate degradation; pentose phosphate pathway; D-ribose 5-phosphate from D-ribulose 5-phosphate (non-oxidative stage): step 1/1. Catalyzes the reversible conversion of ribose-5-phosphate to ribulose 5-phosphate. The chain is Ribose-5-phosphate isomerase A from Sphingopyxis alaskensis (strain DSM 13593 / LMG 18877 / RB2256) (Sphingomonas alaskensis).